We begin with the raw amino-acid sequence, 214 residues long: FMN-dependent NADH:quinone oxidoreductase 1 (214 aa).

Residues 17 to 19 and 144 to 147 each bind FMN; these read SWS and SAGG.

The protein belongs to the azoreductase type 1 family. Homodimer. FMN serves as cofactor.

The enzyme catalyses 2 a quinone + NADH + H(+) = 2 a 1,4-benzosemiquinone + NAD(+). It catalyses the reaction N,N-dimethyl-1,4-phenylenediamine + anthranilate + 2 NAD(+) = 2-(4-dimethylaminophenyl)diazenylbenzoate + 2 NADH + 2 H(+). Its function is as follows. Quinone reductase that provides resistance to thiol-specific stress caused by electrophilic quinones. Functionally, also exhibits azoreductase activity. Catalyzes the reductive cleavage of the azo bond in aromatic azo compounds to the corresponding amines. The polypeptide is FMN-dependent NADH:quinone oxidoreductase 1 (Lactococcus lactis subsp. lactis (strain IL1403) (Streptococcus lactis)).